Reading from the N-terminus, the 89-residue chain is Cytochrome b (89 aa).

Helical transmembrane passes span Phe-38 to Met-58 and Trp-82 to Ala-89. His-88 provides a ligand contact to heme b.

Belongs to the cytochrome b family. The main subunits of complex b-c1 are: cytochrome b, cytochrome c1 and the Rieske protein. Heme b is required as a cofactor.

The protein localises to the mitochondrion inner membrane. Functionally, component of the ubiquinol-cytochrome c reductase complex (complex III or cytochrome b-c1 complex) that is part of the mitochondrial respiratory chain. The b-c1 complex mediates electron transfer from ubiquinol to cytochrome c. Contributes to the generation of a proton gradient across the mitochondrial membrane that is then used for ATP synthesis. The chain is Cytochrome b (MT-CYB) from Brassica napus (Rape).